Here is a 57-residue protein sequence, read N- to C-terminus: Insulin (57 aa).

3 cysteine pairs are disulfide-bonded: Cys-12/Cys-43, Cys-24/Cys-56, and Cys-42/Cys-47.

This sequence belongs to the insulin family. As to quaternary structure, heterodimer of a B chain and an A chain linked by two disulfide bonds.

The protein resides in the secreted. Its function is as follows. Insulin decreases blood glucose concentration. It increases cell permeability to monosaccharides, amino acids and fatty acids. It accelerates glycolysis, the pentose phosphate cycle, and glycogen synthesis in liver. This Lampetra fluviatilis (European river lamprey) protein is Insulin (ins).